The following is a 709-amino-acid chain: Polyribonucleotide nucleotidyltransferase (709 aa).

The Mg(2+) site is built by aspartate 486 and aspartate 492. One can recognise a KH domain in the interval 553–612 (PRIHTIKINADKIKDVIGKGGSVIRALTEETGTTIEIEDDGTVKIAATSGEQAKQAIARI). In terms of domain architecture, S1 motif spans 622-690 (GRIYNGKVTR…RQGRIRLSMK (69 aa)). Positions 690-709 (KEAQATQQEAAETSSEDPAN) are disordered. Residues 691 to 702 (EAQATQQEAAET) show a composition bias toward low complexity.

The protein belongs to the polyribonucleotide nucleotidyltransferase family. As to quaternary structure, component of the RNA degradosome, which is a multiprotein complex involved in RNA processing and mRNA degradation. Requires Mg(2+) as cofactor.

It is found in the cytoplasm. The catalysed reaction is RNA(n+1) + phosphate = RNA(n) + a ribonucleoside 5'-diphosphate. In terms of biological role, involved in mRNA degradation. Catalyzes the phosphorolysis of single-stranded polyribonucleotides processively in the 3'- to 5'-direction. The chain is Polyribonucleotide nucleotidyltransferase from Proteus mirabilis (strain HI4320).